The following is a 474-amino-acid chain: 3-isopropylmalate dehydratase large subunit (474 aa).

[4Fe-4S] cluster is bound by residues cysteine 350, cysteine 415, and cysteine 418.

This sequence belongs to the aconitase/IPM isomerase family. LeuC type 1 subfamily. As to quaternary structure, heterodimer of LeuC and LeuD. It depends on [4Fe-4S] cluster as a cofactor.

The enzyme catalyses (2R,3S)-3-isopropylmalate = (2S)-2-isopropylmalate. It participates in amino-acid biosynthesis; L-leucine biosynthesis; L-leucine from 3-methyl-2-oxobutanoate: step 2/4. Catalyzes the isomerization between 2-isopropylmalate and 3-isopropylmalate, via the formation of 2-isopropylmaleate. The sequence is that of 3-isopropylmalate dehydratase large subunit from Phenylobacterium zucineum (strain HLK1).